The chain runs to 1294 residues: uncharacterized protein (1294 aa).

Residues 1–375 (MSQQENGDVA…RNFKLNFSDY (375 aa)) are Extracellular-facing. One can recognise an ABC transporter 1 domain in the interval 28-287 (LHVRDLSIVA…FESIGYHVPQ (260 aa)). Residue Asn-41 is glycosylated (N-linked (GlcNAc...) asparagine). 62-69 (GGSGSGKT) is an ATP binding site. N-linked (GlcNAc...) asparagine glycans are attached at residues Asn-86, Asn-101, Asn-151, Asn-341, Asn-349, and Asn-371. Residues 376–396 (VTLISTFAEPLIIGTVCGWIY) traverse the membrane as a helical segment. Topologically, residues 397 to 495 (YKPDKSSIGG…EADARKFFYQ (99 aa)) are cytoplasmic. A helical transmembrane segment spans residues 496 to 516 (FAVVFLCQLSCSGLSMLSVAV). At 517 to 530 (SRDFSKASLVGNMT) the chain is on the extracellular side. A glycan (N-linked (GlcNAc...) asparagine) is linked at Asn-528. A helical membrane pass occupies residues 531 to 551 (FTVLSMGCGFFVNAKVMPVYV). The Cytoplasmic segment spans residues 552–604 (RWIKYIAFTWYSFGTLMSSTFTNSYCTTDNLDECLGNQILEVYGFPRNWITVP). A helical transmembrane segment spans residues 605–625 (AVVLLCWSVGYFVVGAIILYL). Topologically, residues 626 to 1038 (HKIDITLQNE…TTTRRSFDSL (413 aa)) are extracellular. Residues 679-941 (IKLEDIDLRV…FTELGYNCPS (263 aa)) enclose the ABC transporter 2 domain. 727–734 (GPSGSGKS) contacts ATP. N-linked (GlcNAc...) asparagine glycosylation is present at Asn-983. The helical transmembrane segment at 1039-1059 (MARIAQIPGLGVIFALFFAPV) threads the bilayer. Topologically, residues 1060–1120 (KHNYTSISNR…PFFLAYMTLE (61 aa)) are cytoplasmic. A helical transmembrane segment spans residues 1121 to 1141 (LPLSALASVLYAVFTVLACGL). Residues 1142-1266 (PRTAGNFFAT…YGLVRNTQKY (125 aa)) lie on the Extracellular side of the membrane. A helical membrane pass occupies residues 1267–1287 (LGIIVCVAIIYRLIAFFILKA). Over 1288–1294 (KLEWIKW) the chain is Cytoplasmic.

The protein belongs to the ABC transporter superfamily. ABCG family. PDR (TC 3.A.1.205) subfamily.

It is found in the membrane. This is an uncharacterized protein from Saccharomyces cerevisiae (strain ATCC 204508 / S288c) (Baker's yeast).